Here is a 256-residue protein sequence, read N- to C-terminus: Anamorsin homolog (256 aa).

An N-terminal SAM-like domain region spans residues 1 to 136; sequence MNSLSLELNK…DTNESSTINI (136 aa). A disordered region spans residues 126-148; sequence WDTNESSTINIPSTSSNNPWASI. The span at 131–144 shows a compositional bias: low complexity; it reads SSTINIPSTSSNNP. The interval 137–166 is linker; sequence PSTSSNNPWASIEGGDRINENDLVSENDKT. [2Fe-2S] cluster is bound by residues C176, C185, C188, and C190. The segment at 176-190 is fe-S binding site A; that stretch reads CEVGKTKKACKNCTC. [4Fe-4S] cluster is bound by residues C217, C220, C228, and C231. Short sequence motifs (cx2C motif) lie at residues 217–220 and 228–231; these read CGNC and CGGC. Positions 217-231 are fe-S binding site B; the sequence is CGNCSLGDAFRCGGC.

It belongs to the anamorsin family. As to quaternary structure, monomer. The cofactor is [2Fe-2S] cluster. [4Fe-4S] cluster serves as cofactor.

It is found in the cytoplasm. Its subcellular location is the mitochondrion intermembrane space. Functionally, component of the cytosolic iron-sulfur (Fe-S) protein assembly (CIA) machinery. Required for the maturation of extramitochondrial Fe-S proteins. Part of an electron transfer chain functioning in an early step of cytosolic Fe-S biogenesis, facilitating the de novo assembly of a [4Fe-4S] cluster on the cytosolic Fe-S scaffold complex. Electrons are transferred from NADPH via a FAD- and FMN-containing diflavin oxidoreductase. Together with the diflavin oxidoreductase, also required for the assembly of the diferric tyrosyl radical cofactor of ribonucleotide reductase (RNR), probably by providing electrons for reduction during radical cofactor maturation in the catalytic small subunit. This Dictyostelium discoideum (Social amoeba) protein is Anamorsin homolog (rsc43).